The sequence spans 629 residues: tRNA uridine 5-carboxymethylaminomethyl modification enzyme MnmG (629 aa).

13–18 serves as a coordination point for FAD; that stretch reads GGGHAG. 273 to 287 serves as a coordination point for NAD(+); the sequence is GPRYCPSIEDKITRF.

The protein belongs to the MnmG family. As to quaternary structure, homodimer. Heterotetramer of two MnmE and two MnmG subunits. FAD is required as a cofactor.

The protein localises to the cytoplasm. In terms of biological role, NAD-binding protein involved in the addition of a carboxymethylaminomethyl (cmnm) group at the wobble position (U34) of certain tRNAs, forming tRNA-cmnm(5)s(2)U34. The chain is tRNA uridine 5-carboxymethylaminomethyl modification enzyme MnmG from Aeromonas salmonicida (strain A449).